Here is a 555-residue protein sequence, read N- to C-terminus: Oligo-1,6-glucosidase (555 aa).

The active-site Nucleophile is aspartate 199. The active-site Proton donor is glutamate 255.

Belongs to the glycosyl hydrolase 13 family.

It localises to the cytoplasm. The catalysed reaction is Hydrolysis of (1-&gt;6)-alpha-D-glucosidic linkages in some oligosaccharides produced from starch and glycogen by alpha-amylase, and in isomaltose.. The chain is Oligo-1,6-glucosidase (malL) from Heyndrickxia coagulans (Weizmannia coagulans).